A 715-amino-acid chain; its full sequence is Polyribonucleotide nucleotidyltransferase (715 aa).

Positions 485 and 491 each coordinate Mg(2+). Residues 552–611 (PRIHTMKIDPKKIKDVIGKGGAVIRALTEETGTSIDIDDDGTVKIAATDNNAAKAVMARI) enclose the KH domain. The region spanning 621–689 (NAIYKGKVTR…RQNRIRLTMK (69 aa)) is the S1 motif domain. Positions 695-715 (TPVAENVTEEAEVSSEQQAEI) are disordered.

Belongs to the polyribonucleotide nucleotidyltransferase family. As to quaternary structure, component of the RNA degradosome, which is a multiprotein complex involved in RNA processing and mRNA degradation. Mg(2+) is required as a cofactor.

It localises to the cytoplasm. The enzyme catalyses RNA(n+1) + phosphate = RNA(n) + a ribonucleoside 5'-diphosphate. Involved in mRNA degradation. Catalyzes the phosphorolysis of single-stranded polyribonucleotides processively in the 3'- to 5'-direction. The protein is Polyribonucleotide nucleotidyltransferase of Actinobacillus pleuropneumoniae serotype 7 (strain AP76).